The primary structure comprises 207 residues: Large ribosomal subunit protein uL4 (207 aa).

The tract at residues histidine 49–isoleucine 78 is disordered.

This sequence belongs to the universal ribosomal protein uL4 family. In terms of assembly, part of the 50S ribosomal subunit.

In terms of biological role, one of the primary rRNA binding proteins, this protein initially binds near the 5'-end of the 23S rRNA. It is important during the early stages of 50S assembly. It makes multiple contacts with different domains of the 23S rRNA in the assembled 50S subunit and ribosome. Its function is as follows. Forms part of the polypeptide exit tunnel. The sequence is that of Large ribosomal subunit protein uL4 from Streptococcus suis (strain 98HAH33).